The following is a 442-amino-acid chain: Probable D-serine dehydratase (442 aa).

Position 111 is an N6-(pyridoxal phosphate)lysine (lysine 111).

This sequence belongs to the serine/threonine dehydratase family. DsdA subfamily. Requires pyridoxal 5'-phosphate as cofactor.

It catalyses the reaction D-serine = pyruvate + NH4(+). In Sinorhizobium medicae (strain WSM419) (Ensifer medicae), this protein is Probable D-serine dehydratase.